We begin with the raw amino-acid sequence, 1414 residues long: DNA-directed RNA polymerase subunit beta' (1414 aa).

4 residues coordinate Zn(2+): cysteine 70, cysteine 72, cysteine 85, and cysteine 88. Mg(2+) is bound by residues aspartate 461, aspartate 463, and aspartate 465. Zn(2+)-binding residues include cysteine 820, cysteine 894, cysteine 901, and cysteine 904.

Belongs to the RNA polymerase beta' chain family. In terms of assembly, the RNAP catalytic core consists of 2 alpha, 1 beta, 1 beta' and 1 omega subunit. When a sigma factor is associated with the core the holoenzyme is formed, which can initiate transcription. The cofactor is Mg(2+). It depends on Zn(2+) as a cofactor.

It carries out the reaction RNA(n) + a ribonucleoside 5'-triphosphate = RNA(n+1) + diphosphate. Its function is as follows. DNA-dependent RNA polymerase catalyzes the transcription of DNA into RNA using the four ribonucleoside triphosphates as substrates. This Cupriavidus taiwanensis (strain DSM 17343 / BCRC 17206 / CCUG 44338 / CIP 107171 / LMG 19424 / R1) (Ralstonia taiwanensis (strain LMG 19424)) protein is DNA-directed RNA polymerase subunit beta'.